The primary structure comprises 233 residues: Orotidine 5'-phosphate decarboxylase (233 aa).

Substrate contacts are provided by residues Asp13, Lys35, 62–71 (DLKFHDIPNT), Thr122, Arg182, Gln191, Gly211, and Arg212. The active-site Proton donor is the Lys64.

Belongs to the OMP decarboxylase family. Type 1 subfamily. Homodimer.

The catalysed reaction is orotidine 5'-phosphate + H(+) = UMP + CO2. It functions in the pathway pyrimidine metabolism; UMP biosynthesis via de novo pathway; UMP from orotate: step 2/2. Catalyzes the decarboxylation of orotidine 5'-monophosphate (OMP) to uridine 5'-monophosphate (UMP). The chain is Orotidine 5'-phosphate decarboxylase from Pseudomonas fluorescens (strain ATCC BAA-477 / NRRL B-23932 / Pf-5).